Here is a 192-residue protein sequence, read N- to C-terminus: MKNLCGIDEAGRGPLAGPLVVAGVILLEDIVGLNDSKVLSEKKREKLFDEIKEKSKYHIVFSDAKLIDEKGISFCLKSSILEIIENLKEFSNSFLMDGNTNFGIQILQKEIKADAKYAQVSAASILAKVSRDRFMDEISPLYPKYDFHKHKGYGTKAHIEAIKEFGRSDIHRHTFKLKALGENEIGVQKSLF.

Positions K2 to V187 constitute an RNase H type-2 domain. Residues D8, E9, and D97 each contribute to the a divalent metal cation site.

The protein belongs to the RNase HII family. It depends on Mn(2+) as a cofactor. Requires Mg(2+) as cofactor.

It localises to the cytoplasm. The catalysed reaction is Endonucleolytic cleavage to 5'-phosphomonoester.. Endonuclease that specifically degrades the RNA of RNA-DNA hybrids. The chain is Ribonuclease HII from Aliarcobacter butzleri (strain RM4018) (Arcobacter butzleri).